Reading from the N-terminus, the 309-residue chain is Probable 3-hydroxyacyl-CoA dehydrogenase B0272.3 (309 aa).

It belongs to the 3-hydroxyacyl-CoA dehydrogenase family. In terms of assembly, homodimer.

The protein localises to the mitochondrion matrix. It carries out the reaction a (3S)-3-hydroxyacyl-CoA + NAD(+) = a 3-oxoacyl-CoA + NADH + H(+). It participates in lipid metabolism; fatty acid beta-oxidation. The polypeptide is Probable 3-hydroxyacyl-CoA dehydrogenase B0272.3 (Caenorhabditis elegans).